The chain runs to 198 residues: ATP-dependent Clp protease proteolytic subunit (198 aa).

The active-site Nucleophile is the serine 102. The active site involves histidine 127.

It belongs to the peptidase S14 family. Fourteen ClpP subunits assemble into 2 heptameric rings which stack back to back to give a disk-like structure with a central cavity, resembling the structure of eukaryotic proteasomes.

It localises to the cytoplasm. It catalyses the reaction Hydrolysis of proteins to small peptides in the presence of ATP and magnesium. alpha-casein is the usual test substrate. In the absence of ATP, only oligopeptides shorter than five residues are hydrolyzed (such as succinyl-Leu-Tyr-|-NHMec, and Leu-Tyr-Leu-|-Tyr-Trp, in which cleavage of the -Tyr-|-Leu- and -Tyr-|-Trp bonds also occurs).. Cleaves peptides in various proteins in a process that requires ATP hydrolysis. Has a chymotrypsin-like activity. Plays a major role in the degradation of misfolded proteins. In Brachyspira hyodysenteriae (strain ATCC 49526 / WA1), this protein is ATP-dependent Clp protease proteolytic subunit.